The sequence spans 136 residues: Probable S-adenosyl-L-methionine-binding protein PH1056 (136 aa).

A TsaA-like domain is found at 8–126 (IVPVGYIRKE…FPERYDCPKE (119 aa)). Residues 48–49 (HK), R78, and 106–109 (EDGT) contribute to the S-adenosyl-L-methionine site.

The protein belongs to the tRNA methyltransferase O family.

The polypeptide is Probable S-adenosyl-L-methionine-binding protein PH1056 (Pyrococcus horikoshii (strain ATCC 700860 / DSM 12428 / JCM 9974 / NBRC 100139 / OT-3)).